We begin with the raw amino-acid sequence, 470 residues long: Aspartate-semialdehyde dehydrogenase 1 (470 aa).

Residues Thr145 and Lys171 each contribute to the NAD(+) site. Asp243 is an active-site residue. An NAD(+)-binding site is contributed by Gly245. Cys277 is an active-site residue. Residue Glu371 coordinates NAD(+).

It belongs to the aldehyde dehydrogenase family.

It catalyses the reaction L-aspartate 4-semialdehyde + NAD(+) + H2O = L-aspartate + NADH + 2 H(+). Functionally, dehydrogenase involved in the degradation of canavanine, the delta-oxa-analog of arginine, allowing growth on canavanine as sole nitrogen and carbon source. Probably catalyzes the NAD(+)-dependent oxidation of L-aspartate-semialdehyde to L-aspartate. The protein is Aspartate-semialdehyde dehydrogenase 1 of Pseudomonas canavaninivorans.